The chain runs to 122 residues: Large ribosomal subunit protein uL14c (122 aa).

The protein belongs to the universal ribosomal protein uL14 family. As to quaternary structure, part of the 50S ribosomal subunit.

It is found in the plastid. Its subcellular location is the chloroplast. Its function is as follows. Binds to 23S rRNA. This is Large ribosomal subunit protein uL14c from Calycanthus floridus var. glaucus (Eastern sweetshrub).